A 443-amino-acid chain; its full sequence is MSTKRGVTSQDSISLLPDDLLCRILSNLPTKVAVRTSVLSKRWKRFSLSVPLLEFNVSEFHGYYEFARVVHGFLDTSRETCIHKLKLAFEKKQHDRSYLTQWIHNAVKRKVQHLDIGRWSYLGQELIPHSLYTCETLVSLRLHNVSLPDFDHVSLPRLKTMHLIDNIYPNDALLENLISSCPVLEDLNVSRDVENIVKVLRVRSLSLKSLILALDGDRYGDIEDDSWEVVIDAPRLSYLSLRDDQSKSFVLSSVTSPAKVDIDVTFDVVRSVLKNFLLTRSVVRNFFTRLSSVRDMTMSGTTLKVLSRYMRHEPLPQFPNMIQFYAVFCNSDLEKLPNFLESCPNLKSLVLELEVFKKNDLLILSSSIPKCLRSSLEHVEIHTPISGAEAEMKLVKYFLENSAVLKKFTLQLGCKRMDEESIIFKELLRFRRCSASCEVVVEV.

The 47-residue stretch at 10–56 folds into the F-box domain; the sequence is QDSISLLPDDLLCRILSNLPTKVAVRTSVLSKRWKRFSLSVPLLEFN. 5 LRR repeats span residues 139–165, 166–191, 219–243, 275–300, and 325–353; these read SLRLHNVSLPDFDHVSLPRLKTMHLID, NIYPNDALLENLISSCPVLEDLNVSR, YGDIEDDSWEVVIDAPRLSYLSLRD, NFLLTRSVVRNFFTRLSSVRDMTMSG, and YAVFCNSDLEKLPNFLESCPNLKSLVLEL. In terms of domain architecture, FBD spans 361-412; that stretch reads LLILSSSIPKCLRSSLEHVEIHTPISGAEAEMKLVKYFLENSAVLKKFTLQL.

This Arabidopsis thaliana (Mouse-ear cress) protein is Putative F-box/FBD/LRR-repeat protein At5g22670.